Consider the following 241-residue polypeptide: ATP phosphoribosyltransferase (241 aa).

This sequence belongs to the ATP phosphoribosyltransferase family. Short subfamily. Heteromultimer composed of HisG and HisZ subunits.

The protein localises to the cytoplasm. It catalyses the reaction 1-(5-phospho-beta-D-ribosyl)-ATP + diphosphate = 5-phospho-alpha-D-ribose 1-diphosphate + ATP. The protein operates within amino-acid biosynthesis; L-histidine biosynthesis; L-histidine from 5-phospho-alpha-D-ribose 1-diphosphate: step 1/9. Functionally, catalyzes the condensation of ATP and 5-phosphoribose 1-diphosphate to form N'-(5'-phosphoribosyl)-ATP (PR-ATP). Has a crucial role in the pathway because the rate of histidine biosynthesis seems to be controlled primarily by regulation of HisG enzymatic activity. This Gluconobacter oxydans (strain 621H) (Gluconobacter suboxydans) protein is ATP phosphoribosyltransferase.